Consider the following 628-residue polypeptide: Beta-galactosidase large subunit (628 aa).

The Proton donor role is filled by E468. The active-site Nucleophile is E536.

It belongs to the glycosyl hydrolase 2 family. As to quaternary structure, heterodimer of a large (LacL) and a small subunit (LacM).

It catalyses the reaction Hydrolysis of terminal non-reducing beta-D-galactose residues in beta-D-galactosides.. Component of a beta-galactosidase. The polypeptide is Beta-galactosidase large subunit (lacL) (Lactobacillus acidophilus (strain ATCC 700396 / NCK56 / N2 / NCFM)).